Here is a 201-residue protein sequence, read N- to C-terminus: Ribosome maturation factor RimP (201 aa).

This sequence belongs to the RimP family.

The protein localises to the cytoplasm. Functionally, required for maturation of 30S ribosomal subunits. The sequence is that of Ribosome maturation factor RimP from Rhizobium johnstonii (strain DSM 114642 / LMG 32736 / 3841) (Rhizobium leguminosarum bv. viciae).